We begin with the raw amino-acid sequence, 116 residues long: Omega-ctenitoxin-Pn3a (116 aa).

The signal sequence occupies residues 1–19; the sequence is MKMKLLGIILLVSFPFVLG. A propeptide spanning residues 20 to 38 is cleaved from the precursor; it reads FAGIPIEEGENSVEVGEVE. Intrachain disulfides connect Cys41/Cys58, Cys48/Cys64, Cys55/Cys90, Cys57/Cys78, Cys66/Cys76, Cys96/Cys102, and Cys106/Cys111. Histidine amide is present on His115.

This sequence belongs to the neurotoxin 04 (omega-agtx) family. 03 (type II/III omega-agtx) subfamily. As to expression, expressed by the venom gland.

The protein resides in the secreted. This toxin is a potent and practically irreversible antagonist of both Cav2.1/CACNA1A and Cav2.2/CACNA1B calcium channels, while it displays a partial and rapidly reversible block of Cav2.3/CACNA1E calcium channels and no effect on Cav3/CACNA1 calcium channels. Inhibits glutamate uptake from rat brain synaptosomes by an interaction between cysteines from both glutamate transporter and toxin. Blocks potassium-induced exocytosis of synaptic vesicles in brain cortical synaptosomes (IC(50)=1.1 nM). In rat brain, inhibits glutamate release, neuronal death and loss of neurotransmission in the hippocampus resulting from ischemia. In vivo, induces rapid general flaccid paralysis followed by death in 10-30 minutes at dose levels of 5 ug per mouse. In Phoneutria nigriventer (Brazilian armed spider), this protein is Omega-ctenitoxin-Pn3a.